We begin with the raw amino-acid sequence, 510 residues long: GMP synthase [glutamine-hydrolyzing] (510 aa).

Residues 5 to 195 (LVLILDFGGQ…LYEVCHCQGD (191 aa)) form the Glutamine amidotransferase type-1 domain. The Nucleophile role is filled by Cys-82. Catalysis depends on residues His-169 and Glu-171. The 190-residue stretch at 196 to 385 (WTMENYIEKE…LGVPEEIVWR (190 aa)) folds into the GMPS ATP-PPase domain. Residue 223–229 (SGGVDSS) participates in ATP binding.

Homodimer.

It carries out the reaction XMP + L-glutamine + ATP + H2O = GMP + L-glutamate + AMP + diphosphate + 2 H(+). It functions in the pathway purine metabolism; GMP biosynthesis; GMP from XMP (L-Gln route): step 1/1. Catalyzes the synthesis of GMP from XMP. This is GMP synthase [glutamine-hydrolyzing] from Alkaliphilus metalliredigens (strain QYMF).